Here is a 186-residue protein sequence, read N- to C-terminus: Crossover junction endodeoxyribonuclease RuvC (186 aa).

Catalysis depends on residues Asp-7, Glu-67, and Asp-140. Mg(2+) contacts are provided by Asp-7, Glu-67, and Asp-140.

The protein belongs to the RuvC family. As to quaternary structure, homodimer which binds Holliday junction (HJ) DNA. The HJ becomes 2-fold symmetrical on binding to RuvC with unstacked arms; it has a different conformation from HJ DNA in complex with RuvA. In the full resolvosome a probable DNA-RuvA(4)-RuvB(12)-RuvC(2) complex forms which resolves the HJ. Mg(2+) is required as a cofactor.

It localises to the cytoplasm. The catalysed reaction is Endonucleolytic cleavage at a junction such as a reciprocal single-stranded crossover between two homologous DNA duplexes (Holliday junction).. Its function is as follows. The RuvA-RuvB-RuvC complex processes Holliday junction (HJ) DNA during genetic recombination and DNA repair. Endonuclease that resolves HJ intermediates. Cleaves cruciform DNA by making single-stranded nicks across the HJ at symmetrical positions within the homologous arms, yielding a 5'-phosphate and a 3'-hydroxyl group; requires a central core of homology in the junction. The consensus cleavage sequence is 5'-(A/T)TT(C/G)-3'. Cleavage occurs on the 3'-side of the TT dinucleotide at the point of strand exchange. HJ branch migration catalyzed by RuvA-RuvB allows RuvC to scan DNA until it finds its consensus sequence, where it cleaves and resolves the cruciform DNA. The protein is Crossover junction endodeoxyribonuclease RuvC of Chloroherpeton thalassium (strain ATCC 35110 / GB-78).